Reading from the N-terminus, the 460-residue chain is Light-independent protochlorophyllide reductase subunit N (460 aa).

[4Fe-4S] cluster contacts are provided by C22, C47, and C107.

The protein belongs to the BchN/ChlN family. In terms of assembly, protochlorophyllide reductase is composed of three subunits; ChlL, ChlN and ChlB. Forms a heterotetramer of two ChlB and two ChlN subunits. The cofactor is [4Fe-4S] cluster.

It localises to the plastid. Its subcellular location is the cyanelle. The enzyme catalyses chlorophyllide a + oxidized 2[4Fe-4S]-[ferredoxin] + 2 ADP + 2 phosphate = protochlorophyllide a + reduced 2[4Fe-4S]-[ferredoxin] + 2 ATP + 2 H2O. The protein operates within porphyrin-containing compound metabolism; chlorophyll biosynthesis (light-independent). Its function is as follows. Component of the dark-operative protochlorophyllide reductase (DPOR) that uses Mg-ATP and reduced ferredoxin to reduce ring D of protochlorophyllide (Pchlide) to form chlorophyllide a (Chlide). This reaction is light-independent. The NB-protein (ChlN-ChlB) is the catalytic component of the complex. The polypeptide is Light-independent protochlorophyllide reductase subunit N (Cyanophora paradoxa).